The following is a 465-amino-acid chain: Antithrombin-III (465 aa).

A signal peptide spans 1–32; it reads MISNGIGTVTTGKRSMCLFPLLLIGLWGCVTC. 2 disulfide bridges follow: Cys41–Cys161 and Cys54–Cys128. Position 64 is a phosphothreonine (Thr64). The residue at position 69 (Ser69) is a Phosphoserine. Trp82 lines the heparin pocket. Asn129 is a glycosylation site (N-linked (GlcNAc...) asparagine). Heparin is bound at residue Arg162. N-linked (GlcNAc...) asparagine glycosylation occurs at Asn168. Arg178 is a heparin binding site. Residues Asn188 and Asn225 are each glycosylated (N-linked (GlcNAc...) asparagine). Cys280 and Cys463 are joined by a disulfide.

It belongs to the serpin family. In terms of assembly, forms protease inhibiting heterodimer with TMPRSS7. Post-translationally, phosphorylated by FAM20C in the extracellular medium. In terms of tissue distribution, plasma.

The protein localises to the secreted. It localises to the extracellular space. Functionally, most important serine protease inhibitor in plasma that regulates the blood coagulation cascade. AT-III inhibits thrombin, matriptase-3/TMPRSS7, as well as factors IXa, Xa and XIa. Its inhibitory activity is greatly enhanced in the presence of heparin. This is Antithrombin-III (SERPINC1) from Ovis aries (Sheep).